The chain runs to 288 residues: 4-diphosphocytidyl-2-C-methyl-D-erythritol kinase (288 aa).

Residue lysine 8 is part of the active site. Proline 90–serine 100 is an ATP binding site. Aspartate 132 is a catalytic residue.

Belongs to the GHMP kinase family. IspE subfamily.

It carries out the reaction 4-CDP-2-C-methyl-D-erythritol + ATP = 4-CDP-2-C-methyl-D-erythritol 2-phosphate + ADP + H(+). The protein operates within isoprenoid biosynthesis; isopentenyl diphosphate biosynthesis via DXP pathway; isopentenyl diphosphate from 1-deoxy-D-xylulose 5-phosphate: step 3/6. Functionally, catalyzes the phosphorylation of the position 2 hydroxy group of 4-diphosphocytidyl-2C-methyl-D-erythritol. This Chlamydia trachomatis serovar A (strain ATCC VR-571B / DSM 19440 / HAR-13) protein is 4-diphosphocytidyl-2-C-methyl-D-erythritol kinase.